Here is a 713-residue protein sequence, read N- to C-terminus: MQPATPLVLCVLLSQVLLLTSAEDLDCTPGFQQKVFHIDQPAEFIEDQAILNLTFSDCKGNDKLHYEVSSPYFRVNTDGSLVALRNITAVGKTLFVHARTPHAEDMAELVIVGGKDIQGSLQDIFKFARTSPVPRQKRSIVVSPILIPENQRQPFPRDVGKVVDSDRPEGSKFRLTGKGVDQEPKGIFRINENTGSVSVTRNLDRETIATYQLFVETVDVNGRTLEGPVPLEVIVIDQNDNRPIFREGPYIGHVMEGSPTGTTVMRMTAFDADDPATDNALLRYNIRQQTPDKPSPNMFYIDPEKGDIVTVVSPALLDRETLENPKYELIIEAQDMAGLDVGLTGTATATIMIDDKNDHSPKFTKKEFQATVEEGAMGVIVNLTVEDKDDPTTGAWRAAYTIINGNPGQSFEIHTNPQTNEGMLSVVKPLDYEISAFHTLLIKVENEDPLVPDVSYGSSSTATVHITVLDANESPVFYPDPMMVTKQENISVGSVLLTVNATDPDSLQRQTIRYSVYKDPAGWLNINPINGTVDTTALLDRESPFVHNSVYTALFLATDSGNPPATGTGTLLITLEDVNDNAPFIYPTVAEVCDDAKNLSVVILGATDKDLHPNTDPFKFEIHKQTVPDKVWKISKINNTHALVSLLQNLNKANYHLPIMVTDSGKPPMTNITDLRVQVCSCKNSKVDCNAAGAPHFSAATALLLSLFSLARL.

An N-terminal signal peptide occupies residues 1-22; that stretch reads MQPATPLVLCVLLSQVLLLTSA. A propeptide spanning residues 23 to 138 is cleaved from the precursor; that stretch reads EDLDCTPGFQ…RTSPVPRQKR (116 aa). N-linked (GlcNAc...) asparagine glycosylation is found at N52 and N86. Cadherin domains lie at 139–245, 246–363, 364–477, 478–585, and 584–694; these read SIVV…RPIF, REGP…SPKF, TKKE…SPVF, YPDP…APFI, and FIYP…AAGA. The segment at 156-178 is disordered; sequence PRDVGKVVDSDRPEGSKFRLTGK. The segment covering 158–172 has biased composition (basic and acidic residues); sequence DVGKVVDSDRPEGSK. N-linked (GlcNAc...) asparagine glycosylation is found at N382, N489, N500, N530, N598, N638, and N671. Residue G693 is the site of GPI-anchor amidated glycine attachment. A propeptide spans 694-713 (removed in mature form); the sequence is APHFSAATALLLSLFSLARL.

By contrast to classical cadherins, homodimerization in trans is not mediated by cadherin EC1 domain strand-swapping, but instead through a homophilic adhesive interface which joins two elongated EC1-EC2 domains through a region near their Ca2+-binding sites to form a tetrahedral, X-like shape.

The protein resides in the cell membrane. It localises to the cytoplasm. Its function is as follows. Cadherins are calcium-dependent cell adhesion proteins. They preferentially interact with themselves in a homophilic manner in connecting cells; cadherins may thus contribute to the sorting of heterogeneous cell types. May act as a negative regulator of neural cell growth. The polypeptide is Cadherin-13 (CDH13) (Bos taurus (Bovine)).